The sequence spans 664 residues: tRNA (carboxymethyluridine(34)-5-O)-methyltransferase ALKBH8 (664 aa).

The 78-residue stretch at 43 to 120 (QSLVVANGGL…QKIILYLNFV (78 aa)) folds into the RRM domain. Residues 220–337 (KPDQMTINQY…RTSFTFRKVR (118 aa)) form the Fe2OG dioxygenase domain. 227 to 229 (NQY) lines the 2-oxoglutarate pocket. The Fe cation site is built by His238 and Asp240. His242 contributes to the Zn(2+) binding site. His292 provides a ligand contact to Fe cation. 2-oxoglutarate contacts are provided by Arg328 and Arg334. Residues Cys341, Cys343, and Cys349 each coordinate Zn(2+). The interval 411–664 (ADIGCGNGKY…GNWCVILQKA (254 aa)) is methyltransferase domain. Positions 516-575 (KYLKGNRNSQGKKEEMNSDTSVQRSLVEQMPDMGSRDSASSVPRINDSQEGGCNSRQVSN) are disordered. Over residues 552–575 (DSASSVPRINDSQEGGCNSRQVSN) the composition is skewed to polar residues.

The protein belongs to the alkB family. Interacts with TRMT112. The cofactor is Fe(2+).

The protein localises to the cytoplasm. It localises to the nucleus. The catalysed reaction is 5-(carboxymethyl)uridine(34) in tRNA + S-adenosyl-L-methionine = 5-(2-methoxy-2-oxoethyl)uridine(34) in tRNA + S-adenosyl-L-homocysteine. Its function is as follows. Catalyzes the methylation of 5-carboxymethyl uridine to 5-methylcarboxymethyl uridine at the wobble position of the anticodon loop in tRNA via its methyltransferase domain. Catalyzes the last step in the formation of 5-methylcarboxymethyl uridine at the wobble position of the anticodon loop in target tRNA. Has a preference for tRNA(Arg) and tRNA(Glu), and does not bind tRNA(Lys). Binds tRNA and catalyzes the iron and alpha-ketoglutarate dependent hydroxylation of 5-methylcarboxymethyl uridine at the wobble position of the anticodon loop in tRNA via its dioxygenase domain, giving rise to 5-(S)-methoxycarbonylhydroxymethyluridine; has a preference for tRNA(Gly). Required for normal survival after DNA damage. May inhibit apoptosis and promote cell survival and angiogenesis. This Macaca fascicularis (Crab-eating macaque) protein is tRNA (carboxymethyluridine(34)-5-O)-methyltransferase ALKBH8 (ALKBH8).